An 80-amino-acid chain; its full sequence is uncharacterized protein (80 aa).

The next 3 helical transmembrane spans lie at 2–22 (INLW…IGQV), 32–52 (FFGM…LTGG), and 55–75 (LVTG…RFMV).

It is found in the cell membrane. This is an uncharacterized protein from Escherichia coli (strain K12).